Reading from the N-terminus, the 176-residue chain is Disulfide bond formation protein B (176 aa).

Over 1 to 14 (MLQFLNRCSRGRGA) the chain is Cytoplasmic. Residues 15-31 (WLLMALTAFLLELTALY) traverse the membrane as a helical segment. The Periplasmic segment spans residues 32 to 49 (FQHIMLLQPCVMCIYERV). Cysteines 41 and 44 form a disulfide. Residues 50-65 (ALFGILGASLLGAIAP) traverse the membrane as a helical segment. The Cytoplasmic segment spans residues 66 to 71 (RSPLRY). A helical membrane pass occupies residues 72-89 (LAIAVWIYSAWKGVQLAW). Residues 90–144 (AHTMLQLNPSPFNTCDFFVNFPSWLPLDKWLPAVFAASGDCSERQWQFMSLEMPQ) are Periplasmic-facing. Cysteine 104 and cysteine 130 form a disulfide bridge. A helical transmembrane segment spans residues 145–163 (WLVGIFAAYLVIAVLVLIS). The Cytoplasmic segment spans residues 164–176 (QFVKPKRRDLFGR).

Belongs to the DsbB family.

It is found in the cell inner membrane. Functionally, required for disulfide bond formation in some periplasmic proteins. Acts by oxidizing the DsbA protein. This Yersinia pestis bv. Antiqua (strain Nepal516) protein is Disulfide bond formation protein B.